Here is a 220-residue protein sequence, read N- to C-terminus: Claudin-24 (220 aa).

Over 1 to 10 (MALIFRTAMQ) the chain is Cytoplasmic. Residues 11-31 (SVGLLLSLLGWILSIITTYLP) form a helical membrane-spanning segment. Over 32–81 (HWKNLNLDLNEMENWTMGLWQTCVIQEEVGMQCKDFDSFLALPAELRVSR) the chain is Extracellular. The helical transmembrane segment at 82–102 (ILMFLSNGLGFLGLLVSGFGL) threads the bilayer. Topologically, residues 103–117 (DCLRIGESQRDLKRR) are cytoplasmic. Residues 118–138 (LLILGGILSWASGITALVPVS) traverse the membrane as a helical segment. The Extracellular portion of the chain corresponds to 139–161 (WVAHKTVQEFWDENVPDFVPRWE). Residues 162 to 182 (FGEALFLGWFAGLSLLLGGCL) form a helical membrane-spanning segment. At 183 to 220 (LNCAACSSHAPLALGHYAVAQMQTQCPYLEDGTADPQV) the chain is on the cytoplasmic side.

The protein belongs to the claudin family.

The protein resides in the cell junction. Its subcellular location is the tight junction. It localises to the cell membrane. Functionally, plays a major role in tight junction-specific obliteration of the intercellular space, through calcium-independent cell-adhesion activity. This chain is Claudin-24, found in Homo sapiens (Human).